The sequence spans 527 residues: 2-isopropylmalate synthase (527 aa).

Positions 18 to 280 constitute a Pyruvate carboxyltransferase domain; sequence IRIFDTTLRD…QTNINSKRLV (263 aa). Mn(2+)-binding residues include aspartate 27, histidine 215, histidine 217, and asparagine 251. Residues 405–527 form a regulatory domain region; sequence TLVDYEVTSG…ASDPGELPQP (123 aa).

This sequence belongs to the alpha-IPM synthase/homocitrate synthase family. LeuA type 1 subfamily. As to quaternary structure, homodimer. Mn(2+) serves as cofactor.

The protein resides in the cytoplasm. The enzyme catalyses 3-methyl-2-oxobutanoate + acetyl-CoA + H2O = (2S)-2-isopropylmalate + CoA + H(+). It functions in the pathway amino-acid biosynthesis; L-leucine biosynthesis; L-leucine from 3-methyl-2-oxobutanoate: step 1/4. Its function is as follows. Catalyzes the condensation of the acetyl group of acetyl-CoA with 3-methyl-2-oxobutanoate (2-ketoisovalerate) to form 3-carboxy-3-hydroxy-4-methylpentanoate (2-isopropylmalate). The polypeptide is 2-isopropylmalate synthase (Rhodopirellula baltica (strain DSM 10527 / NCIMB 13988 / SH1)).